We begin with the raw amino-acid sequence, 277 residues long: Glutamate racemase (277 aa).

Substrate-binding positions include 9–10 and 41–42; these read DS and YG. Cysteine 73 acts as the Proton donor/acceptor in catalysis. Substrate is bound at residue 74 to 75; sequence NT. Residue cysteine 183 is the Proton donor/acceptor of the active site. 184–185 contributes to the substrate binding site; that stretch reads TH.

This sequence belongs to the aspartate/glutamate racemases family.

It carries out the reaction L-glutamate = D-glutamate. It participates in cell wall biogenesis; peptidoglycan biosynthesis. Provides the (R)-glutamate required for cell wall biosynthesis. The polypeptide is Glutamate racemase (Shewanella denitrificans (strain OS217 / ATCC BAA-1090 / DSM 15013)).